The chain runs to 259 residues: 5'-nucleotidase SurE (259 aa).

The a divalent metal cation site is built by Asp8, Asp9, Ser39, and Asn96.

Belongs to the SurE nucleotidase family. Requires a divalent metal cation as cofactor.

Its subcellular location is the cytoplasm. It catalyses the reaction a ribonucleoside 5'-phosphate + H2O = a ribonucleoside + phosphate. Its function is as follows. Nucleotidase that shows phosphatase activity on nucleoside 5'-monophosphates. This chain is 5'-nucleotidase SurE, found in Pelotomaculum thermopropionicum (strain DSM 13744 / JCM 10971 / SI).